Consider the following 195-residue polypeptide: Probable GTP-binding protein EngB (195 aa).

The EngB-type G domain maps to 22 to 195; it reads GRPEVALAGR…WAALLPFVAS (174 aa). Residues 30–37, 57–61, 75–78, 142–145, and 174–176 each bind GTP; these read GRSNVGKS, GKTQT, DVPG, TKAD, and FSA. The Mg(2+) site is built by serine 37 and threonine 59.

This sequence belongs to the TRAFAC class TrmE-Era-EngA-EngB-Septin-like GTPase superfamily. EngB GTPase family. It depends on Mg(2+) as a cofactor.

Necessary for normal cell division and for the maintenance of normal septation. This chain is Probable GTP-binding protein EngB, found in Geobacillus kaustophilus (strain HTA426).